The chain runs to 463 residues: Cytochrome c-552 (463 aa).

The N-terminal stretch at M1–A23 is a signal peptide. Heme c is bound at residue H83. Residues C111, C114, and K115 each coordinate heme. 6 residues coordinate heme c: C149, C152, H153, C191, C194, and H195. Residues E197, Y198, K246, and Q248 each contribute to the Ca(2+) site. Position 198 (Y198) interacts with substrate. H249 serves as a coordination point for substrate. Heme c is bound by residues H260, C267, C270, H271, H286, C299, C302, H303, and H378.

The protein belongs to the cytochrome c-552 family. Requires Ca(2+) as cofactor. Heme c is required as a cofactor.

The protein localises to the periplasm. The enzyme catalyses 6 Fe(III)-[cytochrome c] + NH4(+) + 2 H2O = 6 Fe(II)-[cytochrome c] + nitrite + 8 H(+). The protein operates within nitrogen metabolism; nitrate reduction (assimilation). In terms of biological role, catalyzes the reduction of nitrite to ammonia, consuming six electrons in the process. The protein is Cytochrome c-552 of Shewanella frigidimarina (strain NCIMB 400).